Consider the following 290-residue polypeptide: 4-hydroxy-3-methylbut-2-enyl diphosphate reductase (290 aa).

C13 serves as a coordination point for [4Fe-4S] cluster. Residues H41 and H75 each contribute to the (2E)-4-hydroxy-3-methylbut-2-enyl diphosphate site. Dimethylallyl diphosphate contacts are provided by H41 and H75. Residues H41 and H75 each contribute to the isopentenyl diphosphate site. C97 provides a ligand contact to [4Fe-4S] cluster. H129 provides a ligand contact to (2E)-4-hydroxy-3-methylbut-2-enyl diphosphate. H129 contributes to the dimethylallyl diphosphate binding site. H129 provides a ligand contact to isopentenyl diphosphate. E131 acts as the Proton donor in catalysis. (2E)-4-hydroxy-3-methylbut-2-enyl diphosphate is bound at residue T167. C198 contributes to the [4Fe-4S] cluster binding site. (2E)-4-hydroxy-3-methylbut-2-enyl diphosphate-binding residues include S226, S227, N228, and S270. Dimethylallyl diphosphate-binding residues include S226, S227, N228, and S270. S226, S227, N228, and S270 together coordinate isopentenyl diphosphate.

The protein belongs to the IspH family. The cofactor is [4Fe-4S] cluster.

It catalyses the reaction isopentenyl diphosphate + 2 oxidized [2Fe-2S]-[ferredoxin] + H2O = (2E)-4-hydroxy-3-methylbut-2-enyl diphosphate + 2 reduced [2Fe-2S]-[ferredoxin] + 2 H(+). The catalysed reaction is dimethylallyl diphosphate + 2 oxidized [2Fe-2S]-[ferredoxin] + H2O = (2E)-4-hydroxy-3-methylbut-2-enyl diphosphate + 2 reduced [2Fe-2S]-[ferredoxin] + 2 H(+). It functions in the pathway isoprenoid biosynthesis; dimethylallyl diphosphate biosynthesis; dimethylallyl diphosphate from (2E)-4-hydroxy-3-methylbutenyl diphosphate: step 1/1. It participates in isoprenoid biosynthesis; isopentenyl diphosphate biosynthesis via DXP pathway; isopentenyl diphosphate from 1-deoxy-D-xylulose 5-phosphate: step 6/6. Its function is as follows. Catalyzes the conversion of 1-hydroxy-2-methyl-2-(E)-butenyl 4-diphosphate (HMBPP) into a mixture of isopentenyl diphosphate (IPP) and dimethylallyl diphosphate (DMAPP). Acts in the terminal step of the DOXP/MEP pathway for isoprenoid precursor biosynthesis. In Parabacteroides distasonis (strain ATCC 8503 / DSM 20701 / CIP 104284 / JCM 5825 / NCTC 11152), this protein is 4-hydroxy-3-methylbut-2-enyl diphosphate reductase.